The chain runs to 145 residues: Cytochrome c550 (145 aa).

The signal sequence occupies residues 1–24; it reads MNKNNVLRGLLVLAGLSLSSLALA. The Cytochrome c domain occupies 60–142; it reads LAVEIGASAY…AIRSYLESVH (83 aa). Heme c is bound by residues cysteine 73, cysteine 76, histidine 77, and methionine 119.

Monomer. Interacts with the quinoprotein ethanol dehydrogenase (QEDH) ExaA. In terms of processing, binds 1 heme group per subunit.

The protein localises to the periplasm. Its pathway is alcohol metabolism; ethanol degradation; acetate from ethanol. Its function is as follows. Is an essential component of the ethanol oxidation system that allows P.aeruginosa to grow on ethanol as the sole carbon and energy source. Is the direct electron acceptor of the quinoprotein ethanol dehydrogenase (QEDH). In Pseudomonas aeruginosa (strain ATCC 15692 / DSM 22644 / CIP 104116 / JCM 14847 / LMG 12228 / 1C / PRS 101 / PAO1), this protein is Cytochrome c550.